A 396-amino-acid polypeptide reads, in one-letter code: 3-amino-4-hydroxybenzoate 2-monooxygenase PtmB3 (396 aa).

FAD-binding positions include alanine 19, 38 to 39 (EQ), and arginine 112. The active-site Proton acceptor is tyrosine 217. Residue aspartate 295 participates in FAD binding. Residues 352 to 371 (RERGHEFHLPDGPQQRLRDR) are disordered.

This sequence belongs to the 6-hydroxynicotinate 3-monooxygenase family. The cofactor is FAD.

It carries out the reaction 3-amino-4-hydroxybenzoate + NADPH + O2 + H(+) = 3-amino-2,4-dihydroxybenzoate + NADP(+) + H2O. It participates in antibiotic biosynthesis. Its function is as follows. Part of a gene cluster involved in the biosynthesis of thioplatensimycin (thioPTM) and platensimycin (PTM), potent and selective inhibitors of bacterial and mammalian fatty acid synthases. Catalyzes the hydroxylation of 3-amino-4-hydroxybenzoate (3,4-AHBA) to 3-amino-2,4-dihydroxybenzoate (3,2,4-ADHBA). The polypeptide is 3-amino-4-hydroxybenzoate 2-monooxygenase PtmB3 (Streptomyces platensis).